A 516-amino-acid polypeptide reads, in one-letter code: 2-isopropylmalate synthase (516 aa).

The Pyruvate carboxyltransferase domain occupies 5-267 (VIIFDTTLRD…STNIVHKEIY (263 aa)). Mn(2+) is bound by residues Asp-14, His-202, His-204, and Asn-238. The regulatory domain stretch occupies residues 392–516 (YLKFFSVQSI…NKKLKNLKKY (125 aa)).

This sequence belongs to the alpha-IPM synthase/homocitrate synthase family. LeuA type 1 subfamily. Homodimer. The cofactor is Mn(2+).

The protein resides in the cytoplasm. It carries out the reaction 3-methyl-2-oxobutanoate + acetyl-CoA + H2O = (2S)-2-isopropylmalate + CoA + H(+). Its pathway is amino-acid biosynthesis; L-leucine biosynthesis; L-leucine from 3-methyl-2-oxobutanoate: step 1/4. Functionally, catalyzes the condensation of the acetyl group of acetyl-CoA with 3-methyl-2-oxobutanoate (2-ketoisovalerate) to form 3-carboxy-3-hydroxy-4-methylpentanoate (2-isopropylmalate). In Buchnera aphidicola subsp. Diuraphis noxia, this protein is 2-isopropylmalate synthase.